A 205-amino-acid chain; its full sequence is MKIGLLGKKIGMTQIFDPGGKALPVTILKLGPCLITDIKKMESHGYAAIQIGYVKVNGNKLNKAQIGHLNKYNMPLVKFLKEYKVASTENYQIGKWITVEDLSINQNISVSGTSIGKGFTGCIKRHNFSRGPMSHGSKNHRQPGSIGAGTTPGKVFAGKKMAGRMGGKKVTIQNLKIIDIKINNNLIIVKGSVPGKPGNIVSIYQ.

A disordered region spans residues 130–150 (RGPMSHGSKNHRQPGSIGAGT).

This sequence belongs to the universal ribosomal protein uL3 family. As to quaternary structure, part of the 50S ribosomal subunit.

It localises to the plastid. It is found in the chloroplast. In terms of biological role, one of the primary rRNA binding proteins, it binds directly near the 3'-end of the 23S rRNA, where it nucleates assembly of the 50S subunit. In Gracilaria tenuistipitata var. liui (Red alga), this protein is Large ribosomal subunit protein uL3c (rpl3).